The chain runs to 105 residues: Large ribosomal subunit protein uL24 (105 aa).

Belongs to the universal ribosomal protein uL24 family. Part of the 50S ribosomal subunit.

In terms of biological role, one of two assembly initiator proteins, it binds directly to the 5'-end of the 23S rRNA, where it nucleates assembly of the 50S subunit. Its function is as follows. One of the proteins that surrounds the polypeptide exit tunnel on the outside of the subunit. The protein is Large ribosomal subunit protein uL24 of Parvibaculum lavamentivorans (strain DS-1 / DSM 13023 / NCIMB 13966).